The chain runs to 508 residues: Photosystem II CP47 reaction center protein (508 aa).

The next 6 helical transmembrane spans lie at alanine 21–serine 36, isoleucine 101–tryptophan 115, glycine 140–phenylalanine 156, isoleucine 203–serine 218, valine 237–valine 252, and threonine 457–arginine 472.

The protein belongs to the PsbB/PsbC family. PsbB subfamily. As to quaternary structure, PSII is composed of 1 copy each of membrane proteins PsbA, PsbB, PsbC, PsbD, PsbE, PsbF, PsbH, PsbI, PsbJ, PsbK, PsbL, PsbM, PsbT, PsbX, PsbY, PsbZ, Psb30/Ycf12, at least 3 peripheral proteins of the oxygen-evolving complex and a large number of cofactors. It forms dimeric complexes. Binds multiple chlorophylls. PSII binds additional chlorophylls, carotenoids and specific lipids. is required as a cofactor.

It localises to the plastid. It is found in the chloroplast thylakoid membrane. Functionally, one of the components of the core complex of photosystem II (PSII). It binds chlorophyll and helps catalyze the primary light-induced photochemical processes of PSII. PSII is a light-driven water:plastoquinone oxidoreductase, using light energy to abstract electrons from H(2)O, generating O(2) and a proton gradient subsequently used for ATP formation. The protein is Photosystem II CP47 reaction center protein of Brachypodium distachyon (Purple false brome).